Consider the following 404-residue polypeptide: CCA-adding enzyme (404 aa).

Positions 32 and 35 each coordinate ATP. CTP-binding residues include glycine 32 and arginine 35. The Mg(2+) site is built by aspartate 45 and aspartate 47. Residues arginine 116, aspartate 159, arginine 162, arginine 165, and arginine 168 each contribute to the ATP site. 5 residues coordinate CTP: arginine 116, aspartate 159, arginine 162, arginine 165, and arginine 168.

The protein belongs to the tRNA nucleotidyltransferase/poly(A) polymerase family. Bacterial CCA-adding enzyme type 3 subfamily. In terms of assembly, homodimer. Mg(2+) is required as a cofactor.

It catalyses the reaction a tRNA precursor + 2 CTP + ATP = a tRNA with a 3' CCA end + 3 diphosphate. The catalysed reaction is a tRNA with a 3' CCA end + 2 CTP + ATP = a tRNA with a 3' CCACCA end + 3 diphosphate. In terms of biological role, catalyzes the addition and repair of the essential 3'-terminal CCA sequence in tRNAs without using a nucleic acid template. Adds these three nucleotides in the order of C, C, and A to the tRNA nucleotide-73, using CTP and ATP as substrates and producing inorganic pyrophosphate. tRNA 3'-terminal CCA addition is required both for tRNA processing and repair. Also involved in tRNA surveillance by mediating tandem CCA addition to generate a CCACCA at the 3' terminus of unstable tRNAs. While stable tRNAs receive only 3'-terminal CCA, unstable tRNAs are marked with CCACCA and rapidly degraded. The polypeptide is CCA-adding enzyme (Ligilactobacillus salivarius (strain UCC118) (Lactobacillus salivarius)).